The sequence spans 163 residues: Probable protein tyrosine phosphatase type IVA B (163 aa).

Positions 10-161 (TIIESSTHKF…YKASKKAGCK (152 aa)) constitute a Tyrosine-protein phosphatase domain. A disulfide bridge connects residues cysteine 49 and cysteine 104. Aspartate 70 (proton donor) is an active-site residue. Residue cysteine 104 is the Phosphocysteine intermediate of the active site. 105-110 (IAGLGR) is a binding site for phosphate. Arginine 110 contributes to the substrate binding site. The residue at position 160 (cysteine 160) is a Cysteine methyl ester. Residue cysteine 160 is the site of S-farnesyl cysteine attachment. The propeptide at 161–163 (KIM) is removed in mature form.

It belongs to the protein-tyrosine phosphatase family.

Its subcellular location is the membrane. The catalysed reaction is O-phospho-L-tyrosyl-[protein] + H2O = L-tyrosyl-[protein] + phosphate. The sequence is that of Probable protein tyrosine phosphatase type IVA B from Dictyostelium discoideum (Social amoeba).